Consider the following 143-residue polypeptide: Putative pre-16S rRNA nuclease (143 aa).

Belongs to the YqgF nuclease family.

It localises to the cytoplasm. In terms of biological role, could be a nuclease involved in processing of the 5'-end of pre-16S rRNA. This chain is Putative pre-16S rRNA nuclease, found in Crocosphaera subtropica (strain ATCC 51142 / BH68) (Cyanothece sp. (strain ATCC 51142)).